A 269-amino-acid chain; its full sequence is ATP synthase subunit gamma, mitochondrial (269 aa).

F-type ATP synthases have 2 components, the catalytic core F(1) and the membrane-embedded component F(0), linked together by a central stalk and a peripheral stalk. The central stalk, also called rotor shaft, is often seen as part of F(1). The peripheral stalk is seen as part of F(0). F(0) contains the membrane channel next to the rotor. F-type ATP synthases form dimers but each monomer functions independently in ATP generation. The dimer consists of 18 different polypeptides: ATP1 (subunit alpha, part of F(1), 3 molecules per monomer), ATP2 (subunit beta, part of F(1), 3 molecules per monomer), ATP3 (subunit gamma, part of the central stalk), ATP4 (subunit b, part of the peripheral stalk), ATP5/OSCP (subunit 5/OSCP, part of the peripheral stalk), ATP6 (subunit a, part of the peripheral stalk), ATP7 (subunit d, part of the peripheral stalk), ATP8 (subunit 8, part of the peripheral stalk), OLI1 (subunit c, part of the rotor, 10 molecules per monomer), ATP14 (subunit h, part of the peripheral stalk), ATP15 (subunit epsilon, part of the central stalk), ATP16 (subunit delta, part of the central stalk), ATP17 (subunit f, part of the peripheral stalk), ATP18 (subunit i/j, part of the peripheral stalk). Dimer-specific subunits are ATP19 (subunit k, at interface between monomers), ATP20 (subunit g, at interface between monomers), TIM11 (subunit e, at interface between monomers). Also contains subunit L.

The protein localises to the mitochondrion inner membrane. Mitochondrial membrane ATP synthase (F(1)F(0) ATP synthase or Complex V) produces ATP from ADP in the presence of a proton gradient across the membrane which is generated by electron transport complexes of the respiratory chain. F-type ATP synthases consist of two structural domains, F(1) - containing the extramembraneous catalytic core, and F(0) - containing the membrane proton channel, linked together by a central stalk and a peripheral stalk. During catalysis, ATP synthesis in the catalytic domain of F(1) is coupled via a rotary mechanism of the central stalk subunits to proton translocation. Part of the complex F(1) domain and the central stalk which is part of the complex rotary element. The gamma/ATP3 subunit protrudes into the catalytic domain formed of alpha/ATP1(3)beta/ATP2(3). Rotation of the central stalk against the surrounding alpha/ATP1(3)beta/ATP2(3) subunits leads to hydrolysis of ATP in three separate catalytic sites on the beta/ATP2 subunits. The protein is ATP synthase subunit gamma, mitochondrial of Pichia angusta (Yeast).